Here is a 143-residue protein sequence, read N- to C-terminus: AP-2 complex subunit sigma (143 aa).

It belongs to the adaptor complexes small subunit family. Adaptor protein complex 2 (AP-2) is a heterotetramer composed of two large adaptins (alpha-type subunit apl3 and beta-type subunit apl1), a medium chain (mu-type subunit apm4) and a small adaptin (sigma-type subunit aps2).

Its subcellular location is the cell membrane. The protein localises to the membrane. It is found in the coated pit. Functionally, component of the adaptor complexes which link clathrin to receptors in coated vesicles. Clathrin-associated protein complexes are believed to interact with the cytoplasmic tails of membrane proteins, leading to their selection and concentration. The sequence is that of AP-2 complex subunit sigma (aps2) from Schizosaccharomyces pombe (strain 972 / ATCC 24843) (Fission yeast).